We begin with the raw amino-acid sequence, 191 residues long: MMTGNLNGGGRGGEGPCGACKFLRRKCVKGCVFAPYFDAEQGTARFAAVHKVFGASNASKMLLRLPLHKRLDAVVTLCYEAMARIRDPVYGSVGHLFSLQHQVMNLQAELAHVQARLSTIQRFPLQSPQQMQPPSFDPAHNNEYAMEPSNLDSVWGEEHLLQDGTGDGDFQELASQFVSRYLPAVKLPACT.

An LOB domain is found at 15–117 (GPCGACKFLR…AELAHVQARL (103 aa)).

It belongs to the LOB domain-containing protein family. Expressed in shoots, roots and floral tissues, but not in stems or leaves.

This is LOB domain-containing protein 19 (LBD19) from Arabidopsis thaliana (Mouse-ear cress).